Here is a 94-residue protein sequence, read N- to C-terminus: Neurotoxin LmNaTx45.2 (94 aa).

The first 18 residues, 1 to 18 (MKLAILSLFLVFQIGVES), serve as a signal peptide directing secretion. An LCN-type CS-alpha/beta domain is found at 20 to 86 (KNGFALDHYG…IGDSRKNYCD (67 aa)). 4 cysteine pairs are disulfide-bonded: Cys34–Cys85, Cys44–Cys63, Cys48–Cys65, and Cys59–Cys85.

It belongs to the long (4 C-C) scorpion toxin superfamily. Sodium channel inhibitor family. Beta subfamily. Expressed by the venom gland.

The protein resides in the secreted. Its function is as follows. Binds voltage-independently at site-4 of sodium channels (Nav) and shift the voltage of activation toward more negative potentials thereby affecting sodium channel activation and promoting spontaneous and repetitive firing. This is Neurotoxin LmNaTx45.2 from Lychas mucronatus (Chinese swimming scorpion).